The sequence spans 359 residues: tRNA-specific 2-thiouridylase MnmA (359 aa).

ATP contacts are provided by residues 9–16 (GMSGGVDS) and M35. C104 (nucleophile) is an active-site residue. A disulfide bridge links C104 with C200. G128 lines the ATP pocket. An interaction with tRNA region spans residues 150–152 (KDQ). Catalysis depends on C200, which acts as the Cysteine persulfide intermediate. Positions 306–307 (RY) are interaction with tRNA.

It belongs to the MnmA/TRMU family.

Its subcellular location is the cytoplasm. The catalysed reaction is S-sulfanyl-L-cysteinyl-[protein] + uridine(34) in tRNA + AH2 + ATP = 2-thiouridine(34) in tRNA + L-cysteinyl-[protein] + A + AMP + diphosphate + H(+). In terms of biological role, catalyzes the 2-thiolation of uridine at the wobble position (U34) of tRNA, leading to the formation of s(2)U34. The polypeptide is tRNA-specific 2-thiouridylase MnmA (Clostridium perfringens (strain ATCC 13124 / DSM 756 / JCM 1290 / NCIMB 6125 / NCTC 8237 / Type A)).